The chain runs to 256 residues: Ribosomal RNA small subunit methyltransferase J (256 aa).

Residues 101-102 (RD), 117-118 (ER), and aspartate 174 each bind S-adenosyl-L-methionine.

It belongs to the methyltransferase superfamily. RsmJ family.

It is found in the cytoplasm. The catalysed reaction is guanosine(1516) in 16S rRNA + S-adenosyl-L-methionine = N(2)-methylguanosine(1516) in 16S rRNA + S-adenosyl-L-homocysteine + H(+). Specifically methylates the guanosine in position 1516 of 16S rRNA. This chain is Ribosomal RNA small subunit methyltransferase J, found in Chromohalobacter salexigens (strain ATCC BAA-138 / DSM 3043 / CIP 106854 / NCIMB 13768 / 1H11).